A 437-amino-acid chain; its full sequence is Elongation factor 1-gamma (437 aa).

At A2 the chain carries N-acetylalanine. In terms of domain architecture, GST N-terminal spans 2–87 (AAGTLYTYPE…YVSNEELRGS (86 aa)). The GST C-terminal domain occupies 88–216 (TPEAAAQVVQ…VKLCEKMAQF (129 aa)). N6-acetyllysine is present on residues K147 and K212. Residues 221–254 (FAETQPKKDTPRKEKGSREEKQKPQAERKEEKKA) show a composition bias toward basic and acidic residues. The segment at 221–268 (FAETQPKKDTPRKEKGSREEKQKPQAERKEEKKAAAPAPEEEMDECEQ) is disordered. A Glycyl lysine isopeptide (Lys-Gly) (interchain with G-Cter in SUMO1) cross-link involves residue K253. Positions 276–437 (AKDPFAHLPK…KAFNQGKIFK (162 aa)) constitute an EF-1-gamma C-terminal domain. A Glycyl lysine isopeptide (Lys-Gly) (interchain with G-Cter in SUMO2) cross-link involves residue K285. The residue at position 401 (K401) is an N6-acetyllysine. Position 434 is an N6-acetyllysine; alternate (K434). Residue K434 is modified to N6-malonyllysine; alternate.

EF-1 is composed of four subunits: alpha, beta, delta, and gamma.

Its function is as follows. Probably plays a role in anchoring the complex to other cellular components. In Macaca fascicularis (Crab-eating macaque), this protein is Elongation factor 1-gamma (EEF1G).